The following is a 657-amino-acid chain: 2',3'-cyclic-nucleotide 2'-phosphodiesterase/3'-nucleotidase (657 aa).

The N-terminal stretch at 1–26 (MMNRRHFIQISATSILALSANRFAMA) is a signal peptide. A divalent metal cation-binding residues include Asp41, His43, Asp86, Asn126, His235, His267, and His269. Substrate-binding positions include Tyr450 and 554–559 (YRAYGN).

It belongs to the 5'-nucleotidase family. It depends on a divalent metal cation as a cofactor.

It localises to the periplasm. The catalysed reaction is a nucleoside 2',3'-cyclic phosphate + H2O = a nucleoside 3'-phosphate + H(+). It catalyses the reaction a ribonucleoside 3'-phosphate + H2O = a ribonucleoside + phosphate. Functionally, this bifunctional enzyme catalyzes two consecutive reactions during ribonucleic acid degradation. Converts a 2',3'-cyclic nucleotide to a 3'-nucleotide and then the 3'-nucleotide to the corresponding nucleoside and phosphate. This Haemophilus influenzae (strain ATCC 51907 / DSM 11121 / KW20 / Rd) protein is 2',3'-cyclic-nucleotide 2'-phosphodiesterase/3'-nucleotidase (cpdB).